Reading from the N-terminus, the 726-residue chain is Catalase-peroxidase (726 aa).

A disordered region spans residues 1–34 (MSMSDDTHNSLSTGKCPFHQGSHDRSAGAGTSSH). Residues 105 to 226 (WHGAGTYRSV…LGATEMGLIY (122 aa)) constitute a cross-link (tryptophyl-tyrosyl-methioninium (Trp-Tyr) (with M-252)). The active-site Proton acceptor is the His-106. A cross-link (tryptophyl-tyrosyl-methioninium (Tyr-Met) (with W-105)) is located at residues 226 to 252 (YVNPEGPDHSGEPLSAAAAIRATFGNM). His-267 provides a ligand contact to heme b.

This sequence belongs to the peroxidase family. Peroxidase/catalase subfamily. In terms of assembly, homodimer or homotetramer. Heme b is required as a cofactor. Formation of the three residue Trp-Tyr-Met cross-link is important for the catalase, but not the peroxidase activity of the enzyme.

The catalysed reaction is H2O2 + AH2 = A + 2 H2O. It carries out the reaction 2 H2O2 = O2 + 2 H2O. Functionally, bifunctional enzyme with both catalase and broad-spectrum peroxidase activity. This chain is Catalase-peroxidase, found in Citrobacter koseri (strain ATCC BAA-895 / CDC 4225-83 / SGSC4696).